Consider the following 283-residue polypeptide: Lactoylglutathione lyase GLX1 (283 aa).

A2 carries the N-acetylalanine modification. VOC domains follow at residues 17 to 141 and 147 to 275; these read RFLH…LIQR and PFCQ…LVDN. A Zn(2+)-binding site is contributed by H20. R24 lines the substrate pocket. E71 is a Zn(2+) binding site. Residues N75 and H89 each coordinate substrate. Zn(2+)-binding residues include H89, E137, and Q150. The active-site Proton donor/acceptor is the E137. Substrate is bound by residues Q150 and R154. Q150 is a binding site for a divalent metal cation. A Zn(2+)-binding site is contributed by E201. Residue E201 coordinates a divalent metal cation. N205 is a binding site for substrate. Q219 is an a divalent metal cation binding site. Residue 251–252 coordinates substrate; it reads PL. V271 is a binding site for a divalent metal cation.

It belongs to the glyoxalase I family. As to quaternary structure, homodimer. Requires Zn(2+) as cofactor. In terms of processing, phosphorylated by SnRK2.8.

The catalysed reaction is (R)-S-lactoylglutathione = methylglyoxal + glutathione. It participates in secondary metabolite metabolism; methylglyoxal degradation; (R)-lactate from methylglyoxal: step 1/2. Its function is as follows. Catalyzes the conversion of hemimercaptal, formed from methylglyoxal and glutathione, to S-lactoylglutathione. The protein is Lactoylglutathione lyase GLX1 of Arabidopsis thaliana (Mouse-ear cress).